The following is a 557-amino-acid chain: Formate--tetrahydrofolate ligase (557 aa).

44-51 (TPLGEGKS) contacts ATP.

Belongs to the formate--tetrahydrofolate ligase family.

The catalysed reaction is (6S)-5,6,7,8-tetrahydrofolate + formate + ATP = (6R)-10-formyltetrahydrofolate + ADP + phosphate. Its pathway is one-carbon metabolism; tetrahydrofolate interconversion. This Desulfotalea psychrophila (strain LSv54 / DSM 12343) protein is Formate--tetrahydrofolate ligase.